The sequence spans 215 residues: UPF0502 protein YceH (215 aa).

Residue K80 is modified to N6-acetyllysine.

This sequence belongs to the UPF0502 family.

The sequence is that of UPF0502 protein YceH from Escherichia coli O81 (strain ED1a).